A 314-amino-acid chain; its full sequence is DNA-directed RNA polymerase subunit alpha (314 aa).

Residues 1-228 (MIEIEKPNIE…EHLNIFVGLT (228 aa)) form an alpha N-terminal domain (alpha-NTD) region. The interval 245 to 314 (KEKVLEMTIE…ELGLGLRNEE (70 aa)) is alpha C-terminal domain (alpha-CTD).

Belongs to the RNA polymerase alpha chain family. Homodimer. The RNAP catalytic core consists of 2 alpha, 1 beta, 1 beta' and 1 omega subunit. When a sigma factor is associated with the core the holoenzyme is formed, which can initiate transcription.

It carries out the reaction RNA(n) + a ribonucleoside 5'-triphosphate = RNA(n+1) + diphosphate. DNA-dependent RNA polymerase catalyzes the transcription of DNA into RNA using the four ribonucleoside triphosphates as substrates. This is DNA-directed RNA polymerase subunit alpha from Shouchella clausii (strain KSM-K16) (Alkalihalobacillus clausii).